Here is a 177-residue protein sequence, read N- to C-terminus: Ubiquinol-cytochrome c reductase iron-sulfur subunit (177 aa).

Residues 18 to 38 (MVLTASSVAAVGAVCTLWPLV) form a helical membrane-spanning segment. Positions 88–175 (ARAVKMSELI…YTFISDKKIR (88 aa)) constitute a Rieske domain. Cysteine 120, histidine 122, cysteine 139, and histidine 142 together coordinate [2Fe-2S] cluster. The cysteines at positions 125 and 141 are disulfide-linked.

It belongs to the Rieske iron-sulfur protein family. The main subunits of complex b-c1 are: cytochrome b, cytochrome c1 and the Rieske protein. It depends on [2Fe-2S] cluster as a cofactor.

It is found in the cell membrane. It catalyses the reaction a quinol + 2 Fe(III)-[cytochrome c](out) = a quinone + 2 Fe(II)-[cytochrome c](out) + 2 H(+)(out). Its function is as follows. Component of the ubiquinol-cytochrome c reductase complex (complex III or cytochrome b-c1 complex), which is a respiratory chain that generates an electrochemical potential coupled to ATP synthesis. This is Ubiquinol-cytochrome c reductase iron-sulfur subunit (petA) from Rickettsia felis (strain ATCC VR-1525 / URRWXCal2) (Rickettsia azadi).